The following is an 840-amino-acid chain: Heat shock 70 kDa protein 4 (840 aa).

Lysine 53 carries the post-translational modification N6-acetyllysine. Serine 76 is modified (phosphoserine). 2 positions are modified to phosphotyrosine: tyrosine 89 and tyrosine 336. Phosphoserine occurs at positions 393 and 415. Lysine 430 carries the post-translational modification N6-acetyllysine. Residues 506-575 (NEEPMETDQN…QAKKAKVKTS (70 aa)) form a disordered region. The span at 514-533 (QNAKEEEKMQVDQEEPHAEE) shows a compositional bias: basic and acidic residues. Threonine 538 carries the post-translational modification Phosphothreonine. Phosphoserine is present on residues serine 546 and serine 647. A Phosphotyrosine modification is found at tyrosine 660. An N6-acetyllysine modification is found at lysine 679. Position 756 is a phosphoserine (serine 756). An N6-methyllysine modification is found at lysine 773. A disordered region spans residues 782–840 (IISKPKPKVEPPKEEQKNAEQNGPVDGQGDSPGPQAAEQGTDTAVPSDSDKKLPEMDID). Composition is skewed to basic and acidic residues over residues 788 to 799 (PKVEPPKEEQKN) and 829 to 840 (DSDKKLPEMDID).

It belongs to the heat shock protein 70 family. In terms of assembly, interacts with TJP1/ZO-1.

The protein resides in the cytoplasm. The sequence is that of Heat shock 70 kDa protein 4 (HSPA4) from Canis lupus familiaris (Dog).